A 669-amino-acid polypeptide reads, in one-letter code: Gametogenetin-binding protein 2 (669 aa).

Disordered stretches follow at residues 375 to 421 and 452 to 475; these read QEKK…GNPC and PHSN…SQEG. Residues 376–388 are compositionally biased toward basic residues; that stretch reads EKKRQKKNRKKNK. Positions 398 to 408 are enriched in polar residues; that stretch reads ETKSANPSQKN.

It is found in the cytoplasm. May be involved in spermatogenesis. This is Gametogenetin-binding protein 2 (ggnbp2) from Xenopus tropicalis (Western clawed frog).